A 322-amino-acid chain; its full sequence is NADH-cytochrome b5 reductase 2 (322 aa).

The helical transmembrane segment at 30 to 46 (LAPVYVAVGLAGLGVGL) threads the bilayer. The region spanning 71-176 (QGWVNLKLSD…KGPLPKYPWE (106 aa)) is the FAD-binding FR-type domain. 179-214 (KHKHICLVAGGTGITPMYQLAREIFKNPEDKTKVTL) serves as a coordination point for FAD.

Belongs to the flavoprotein pyridine nucleotide cytochrome reductase family. Requires FAD as cofactor.

Its subcellular location is the mitochondrion outer membrane. It carries out the reaction 2 Fe(III)-[cytochrome b5] + NADH = 2 Fe(II)-[cytochrome b5] + NAD(+) + H(+). May mediate the reduction of outer membrane cytochrome b5. This is NADH-cytochrome b5 reductase 2 (mcr1) from Emericella nidulans (strain FGSC A4 / ATCC 38163 / CBS 112.46 / NRRL 194 / M139) (Aspergillus nidulans).